The primary structure comprises 132 residues: D-ribose pyranase (132 aa).

The active-site Proton donor is His20. Substrate contacts are provided by residues Asp28, His99, and 121-123 (YSN).

The protein belongs to the RbsD / FucU family. RbsD subfamily. Homodecamer.

It localises to the cytoplasm. It carries out the reaction beta-D-ribopyranose = beta-D-ribofuranose. It participates in carbohydrate metabolism; D-ribose degradation; D-ribose 5-phosphate from beta-D-ribopyranose: step 1/2. Its function is as follows. Catalyzes the interconversion of beta-pyran and beta-furan forms of D-ribose. This is D-ribose pyranase from Lactococcus lactis subsp. lactis (strain IL1403) (Streptococcus lactis).